Reading from the N-terminus, the 330-residue chain is MSNYFSMEAFDYDDIQLVPNKCIIKSRSEADTGVKFGSRTFKIPVVPANMESVIDEDLAIWLAEHGYYYVMHRFYPEKRADFIKMMHDKGLFASISVGIKDSEYDFIDYLAKENIIPEYTTIDVAHGHSDYVIKMIKYIKEKLPDTFLTAGNIATPEAVRELENAGADATKVGVGPGRACITKLKTGFGTGGWQLAALRMCSKAARKPLIADGGIRHNGDIAKSVRFGASMVMIGSLFAGHEESPGNLITIDGKRYKQYWGSASEVQKGAYRNVEGKQMLVPYRGSIKDTLREMQEDLQSSISYAGGKDLSAIRVVDYVIVKSSIFDGDK.

Cys-180 serves as the catalytic Thioimidate intermediate. 209 to 232 (LIADGGIRHNGDIAKSVRFGASMV) contributes to the NADP(+) binding site.

Belongs to the IMPDH/GMPR family. GuaC type 2 subfamily.

It catalyses the reaction IMP + NH4(+) + NADP(+) = GMP + NADPH + 2 H(+). Catalyzes the irreversible NADPH-dependent deamination of GMP to IMP. It functions in the conversion of nucleobase, nucleoside and nucleotide derivatives of G to A nucleotides, and in maintaining the intracellular balance of A and G nucleotides. This is GMP reductase from Lactobacillus johnsonii (strain CNCM I-12250 / La1 / NCC 533).